Consider the following 380-residue polypeptide: Protein Wnt-5a (380 aa).

An N-terminal signal peptide occupies residues 1-37 (MKKPIGILSPGVALGTAGGAMSSKFFLMALATFFSFA). Positions 38–61 (QVVIEANSWWSLGMNNPVQMSEVY) are excised as a propeptide. Residues C104 and C115 are joined by a disulfide bond. N-linked (GlcNAc...) asparagine glycans are attached at residues N114 and N120. 10 cysteine pairs are disulfide-bonded: C154-C162, C164-C182, C238-C252, C240-C247, C309-C340, C325-C335, C339-C379, C355-C370, C357-C367, and C362-C363. The O-palmitoleoyl serine; by PORCN moiety is linked to residue S244. N-linked (GlcNAc...) asparagine glycans are attached at residues N312 and N326.

This sequence belongs to the Wnt family. As to quaternary structure, forms a soluble 1:1 complex with AFM; this prevents oligomerization and is required for prolonged biological activity. The complex with AFM may represent the physiological form in body fluids. Homooligomer; disulfide-linked, leading to inactivation. Interacts with PORCN. Interacts with WLS. Interacts with glypican GCP3. Interacts with PKD1 (via extracellular domain). Interacts with TMEM67. In terms of processing, glycosylation is necessary for secretion but not for activity. Post-translationally, palmitoleoylation is required for efficient binding to frizzled receptors. Depalmitoleoylation leads to Wnt signaling pathway inhibition. Proteolytic processing by TIKI1 and TIKI2 promotes oxidation and formation of large disulfide-bond oligomers, leading to inactivation of WNT5A. In terms of tissue distribution, expressed in a gradient at the caudal end of the embryo during gastrulation and later in the distal-most aspect of several structures that extend from the body such as the limbs and genital tubercle.

The protein localises to the secreted. The protein resides in the extracellular space. It is found in the extracellular matrix. In terms of biological role, ligand for members of the frizzled family of seven transmembrane receptors. Can activate or inhibit canonical Wnt signaling, depending on receptor context. In the presence of FZD4, activates beta-catenin signaling. In the presence of ROR2, inhibits the canonical Wnt pathway by promoting beta-catenin degradation through a GSK3-independent pathway which involves down-regulation of beta-catenin-induced reporter gene expression. Suppression of the canonical pathway allows chondrogenesis to occur and inhibits tumor formation. Stimulates cell migration. Decreases proliferation, migration, invasiveness and clonogenicity of carcinoma cells and may act as a tumor suppressor. Mediates motility of melanoma cells. Required during embryogenesis for extension of the primary anterior-posterior axis and for outgrowth of limbs and the genital tubercle. Inhibits type II collagen expression in chondrocytes. The protein is Protein Wnt-5a (Wnt5a) of Mus musculus (Mouse).